Reading from the N-terminus, the 888-residue chain is E3 ubiquitin-protein ligase SH3RF1 (888 aa).

An RING-type zinc finger spans residues 12-53; sequence CPVCLERLDASAKVLPCQHTFCKRCLLGIVGSRNELRCPECR. SH3 domains lie at 134–193 and 196–259; these read PQLP…IIKP and QPPP…FNSA. The disordered stretch occupies residues 275–321; sequence DAGECSSAAAQSSTAPKHSDTKKNTKKRHSFTSLTMANKSSQASQNR. The tract at residues 292-362 is interaction with RAC1; the sequence is HSDTKKNTKK…APSQVHISTT (71 aa). Position 304 is a phosphoserine (Ser-304). Positions 305 to 321 are enriched in polar residues; it reads FTSLTMANKSSQASQNR. An interaction with AKT2 region spans residues 440–543; that stretch reads HLRPQTRPSV…STAGGPAQKL (104 aa). One can recognise an SH3 3 domain in the interval 445-506; sequence TRPSVYVAIY…PGNYVAPVTR (62 aa). 3 disordered regions span residues 516–549, 617–637, and 693–741; these read VPMS…NGVA, SPAS…APLM, and PDSA…ASPT. A compositionally biased stretch (polar residues) spans 520-535; that stretch reads TAGQTSRGVTMVSPST. Position 532 is a phosphoserine (Ser-532). Polar residues predominate over residues 693–704; the sequence is PDSASLACGNSS. The segment covering 707-718 has biased composition (basic and acidic residues); it reads KPDKDSKKEKKG. At Ser-735 the chain carries Phosphoserine. In terms of domain architecture, SH3 4 spans 829 to 888; that stretch reads VVCERHRVVVSYPPQSEAELELKEGDIVFVHKKREDGWFKGTLQRNGKTGLFPGSFVENI.

This sequence belongs to the SH3RF family. In terms of assembly, interacts with HERP1. Interacts with RAC1; in a GTP-dependent manner. Interacts with MAP3K10/MLK2 and MAP3K11/MLK3. Interacts with MAPK8IP; this interaction leads to the PJAC complex (POSH-JIP or SH3RF1/MAPK8IP apoptotic complex) with a 1:1 ratio. Interacts with SIAH1. Probably part of a signaling complex that may contain SH3RF1, MAPK8IP, DLK1, MAP2K4/MKK4, MAP2K7/MKK7, MAPK8/JNK1, MAPK9/JNK2, AKT1 and AKT2. Found in a complex with RAC2, MAP3K7/TAK1, MAP2K7/MKK7, MAPK8IP1/JIP1, MAPK8/JNK1 and MAPK9/JNK2. Found in a complex with RAC1, MAP3K11/MLK3, MAP2K7/MKK7, MAPK8IP1/JIP1 and MAPK8/JNK1. Interacts with SH3RF2. Post-translationally, phosphorylated at Ser-304 by AKT1 and AKT2. When phosphorylated, it has reduced ability to bind Rac. Autoubiquitinated. Ubiquitinated by SH3RF2, leading to proteasome-mediated degradation.

It is found in the cytoplasm. The protein resides in the perinuclear region. The protein localises to the cell projection. It localises to the lamellipodium. Its subcellular location is the golgi apparatus. It is found in the trans-Golgi network. The enzyme catalyses S-ubiquitinyl-[E2 ubiquitin-conjugating enzyme]-L-cysteine + [acceptor protein]-L-lysine = [E2 ubiquitin-conjugating enzyme]-L-cysteine + N(6)-ubiquitinyl-[acceptor protein]-L-lysine.. Its pathway is protein modification; protein ubiquitination. Functionally, has E3 ubiquitin-protein ligase activity. In the absence of an external substrate, it can catalyze self-ubiquitination. Stimulates ubiquitination of potassium channel KCNJ1, enhancing it's dynamin-dependent and clathrin-independent endocytosis. Acts as a scaffold protein that coordinates with MAPK8IP1/JIP1 in organizing different components of the JNK pathway, including RAC1 or RAC2, MAP3K11/MLK3 or MAP3K7/TAK1, MAP2K7/MKK7, MAPK8/JNK1 and/or MAPK9/JNK2 into a functional multiprotein complex to ensure the effective activation of the JNK signaling pathway. Regulates the differentiation of CD4(+) and CD8(+) T-cells and promotes T-helper 1 (Th1) cell differentiation. Regulates the activation of MAPK8/JNK1 and MAPK9/JNK2 in CD4(+) T-cells and the activation of MAPK8/JNK1 in CD8(+) T-cells. Controls proper cortical neuronal migration and the formation of proximal cytoplasmic dilation in the leading process (PCDLP) in migratory neocortical neurons by regulating the proper localization of activated RAC1 and F-actin assembly. This chain is E3 ubiquitin-protein ligase SH3RF1 (SH3RF1), found in Pongo abelii (Sumatran orangutan).